The primary structure comprises 322 residues: Cytochrome c biogenesis protein CcsA (322 aa).

A run of 8 helical transmembrane segments spans residues 9-29, 44-64, 71-91, 98-118, 143-163, 226-246, 253-273, and 287-307; these read ILTHISFSIVSIVITLHLITL, GMIATFLCLTGLLITRWIYSG, LYESFIFLSWSFSLIHIVPYF, LTTITASSTIFTQGFATSGLL, MILSYAALLCGSLLSVALLVI, VISLGFIFLTIGILSGAVWAN, WSWDPKETWAFITWIVFAIYL, and AIVATLGFLIIWICYFGVNLL.

This sequence belongs to the CcmF/CycK/Ccl1/NrfE/CcsA family. In terms of assembly, may interact with Ccs1.

The protein localises to the plastid. It is found in the chloroplast thylakoid membrane. Its function is as follows. Required during biogenesis of c-type cytochromes (cytochrome c6 and cytochrome f) at the step of heme attachment. The protein is Cytochrome c biogenesis protein CcsA of Guizotia abyssinica (Niger).